A 378-amino-acid chain; its full sequence is DNA replication and repair protein RecF (378 aa).

Position 31 to 38 (31 to 38 (GENGSGKT)) interacts with ATP.

The protein belongs to the RecF family.

It is found in the cytoplasm. In terms of biological role, the RecF protein is involved in DNA metabolism; it is required for DNA replication and normal SOS inducibility. RecF binds preferentially to single-stranded, linear DNA. It also seems to bind ATP. This chain is DNA replication and repair protein RecF, found in Teredinibacter turnerae (strain ATCC 39867 / T7901).